Here is a 127-residue protein sequence, read N- to C-terminus: Ribonuclease P protein component (127 aa).

The protein belongs to the RnpA family. In terms of assembly, consists of a catalytic RNA component (M1 or rnpB) and a protein subunit.

It carries out the reaction Endonucleolytic cleavage of RNA, removing 5'-extranucleotides from tRNA precursor.. RNaseP catalyzes the removal of the 5'-leader sequence from pre-tRNA to produce the mature 5'-terminus. It can also cleave other RNA substrates such as 4.5S RNA. The protein component plays an auxiliary but essential role in vivo by binding to the 5'-leader sequence and broadening the substrate specificity of the ribozyme. In Rippkaea orientalis (strain PCC 8801 / RF-1) (Cyanothece sp. (strain PCC 8801)), this protein is Ribonuclease P protein component.